The primary structure comprises 193 residues: Ion-translocating oxidoreductase complex subunit A (193 aa).

A run of 6 helical transmembrane segments spans residues 5–25 (LLLFVGTVLVNNFVLVKFLGL), 39–59 (MGMGLATTFVMTLASICAWLI), 63–83 (ILIPLNLIYLRTLAFILVIAV), 102–122 (LLGIFLPLITTNCAVLGVALL), 134–154 (ALYGFSAAVGFSLVMVLFAAI), and 171–191 (AIALITAGLMSLAFMGFNGLV).

Belongs to the NqrDE/RnfAE family. The complex is composed of six subunits: RsxA, RsxB, RsxC, RsxD, RsxE and RsxG.

Its subcellular location is the cell inner membrane. Part of a membrane-bound complex that couples electron transfer with translocation of ions across the membrane. Required to maintain the reduced state of SoxR. This chain is Ion-translocating oxidoreductase complex subunit A, found in Shigella sonnei (strain Ss046).